Here is an 877-residue protein sequence, read N- to C-terminus: Phosphoenolpyruvate carboxylase (877 aa).

Active-site residues include His-138 and Lys-544.

The protein belongs to the PEPCase type 1 family. Requires Mg(2+) as cofactor.

The catalysed reaction is oxaloacetate + phosphate = phosphoenolpyruvate + hydrogencarbonate. Its function is as follows. Forms oxaloacetate, a four-carbon dicarboxylic acid source for the tricarboxylic acid cycle. This Vibrio vulnificus (strain CMCP6) protein is Phosphoenolpyruvate carboxylase.